A 320-amino-acid chain; its full sequence is UPF0053 protein in cps region (320 aa).

A helical transmembrane segment spans residues C4–I24. CBS domains lie at M121–L183 and L186–V244.

The protein belongs to the UPF0053 family.

Its subcellular location is the cell membrane. The chain is UPF0053 protein in cps region from Klebsiella pneumoniae.